Consider the following 210-residue polypeptide: Glutathione S-transferase 3 (210 aa).

The GST N-terminal domain maps to Met1–Asn80. Residues Ser9, His50–Ile52, and Glu64–Arg66 each bind glutathione. The 122-residue stretch at Cys87–Phe208 folds into the GST C-terminal domain.

This sequence belongs to the GST superfamily. Theta family. Homodimer.

The enzyme catalyses RX + glutathione = an S-substituted glutathione + a halide anion + H(+). Functionally, conjugation of reduced glutathione to a wide number of exogenous and endogenous hydrophobic electrophiles. This is Glutathione S-transferase 3 (Gst3) from Musca domestica (House fly).